We begin with the raw amino-acid sequence, 127 residues long: ATP synthase epsilon chain (127 aa).

This sequence belongs to the ATPase epsilon chain family. In terms of assembly, F-type ATPases have 2 components, CF(1) - the catalytic core - and CF(0) - the membrane proton channel. CF(1) has five subunits: alpha(3), beta(3), gamma(1), delta(1), epsilon(1). CF(0) has three main subunits: a, b and c.

Its subcellular location is the cell inner membrane. Its function is as follows. Produces ATP from ADP in the presence of a proton gradient across the membrane. In Leptospira borgpetersenii serovar Hardjo-bovis (strain JB197), this protein is ATP synthase epsilon chain.